The sequence spans 459 residues: Phosphoglucosamine mutase (459 aa).

Residue Ser-106 is the Phosphoserine intermediate of the active site. The Mg(2+) site is built by Ser-106, Asp-247, Asp-249, and Asp-251. Ser-106 bears the Phosphoserine mark.

This sequence belongs to the phosphohexose mutase family. Requires Mg(2+) as cofactor. In terms of processing, activated by phosphorylation.

The enzyme catalyses alpha-D-glucosamine 1-phosphate = D-glucosamine 6-phosphate. Catalyzes the conversion of glucosamine-6-phosphate to glucosamine-1-phosphate. The sequence is that of Phosphoglucosamine mutase from Chlamydia muridarum (strain MoPn / Nigg).